We begin with the raw amino-acid sequence, 718 residues long: Adhesin-like cell surface protein MAD1 (718 aa).

The signal sequence occupies residues 1 to 19; sequence MKGAIQFLGALAAVQAVSA. A run of 9 repeats spans residues 217-243, 244-265, 266-282, 283-309, 310-336, 337-358, 359-382, 383-402, and 403-420. The disordered stretch occupies residues 452–472; sequence TSIPYETPSPSETETLPPSGT. The region spanning 462 to 575 is the CFEM domain; the sequence is SETETLPPSG…VTLPPVTTGA (114 aa). 3 cysteine pairs are disulfide-bonded: Cys494/Cys526, Cys504/Cys512, and Cys514/Cys548. Residue Asp509 coordinates heme. Gly693 carries GPI-anchor amidated glycine lipidation. Residues 694–718 constitute a propeptide, removed in mature form; sequence AASSFKAFSTVMLAGVIGLTALIMA.

This sequence belongs to the RBT5 family. The GPI-anchor is attached to the protein in the endoplasmic reticulum and serves to target the protein to the cell surface. There, the glucosamine-inositol phospholipid moiety is cleaved off and the GPI-modified mannoprotein is covalently attached via its lipidless GPI glycan remnant to the 1,6-beta-glucan of the outer cell wall layer.

The protein resides in the secreted. It localises to the cell wall. It is found in the cell membrane. In terms of biological role, cell surface adhesion protein that plays a key role in switching between the saprophytic lifestyle and the predacious lifestyle (nematode trapping). Likely functions to prevent energy-consuming trap formation in the absence of nematodes, and keeps the fungus in the saprophytic life style. May influence the induction signal of trap formation by limiting the porosity of the cell wall and thus affecting its permeability of nitrogen source. This chain is Adhesin-like cell surface protein MAD1, found in Arthrobotrys oligospora (strain ATCC 24927 / CBS 115.81 / DSM 1491) (Nematode-trapping fungus).